Consider the following 233-residue polypeptide: Probable tetraheme cytochrome c-type (233 aa).

The first 28 residues, Met1–Gly28, serve as a signal peptide directing secretion. Residues Cys39, Cys42, Met45, Cys67, Cys70, His71, Glu93, Cys131, Cys134, His135, Cys159, Cys162, His163, and His168 each coordinate heme. The tract at residues Gln182–Glu233 is disordered. Acidic residues-rich tracts occupy residues Asp191–Asp214 and Ser224–Glu233.

The protein belongs to the NapC/NirT/NrfH family. Post-translationally, binds 4 heme groups per subunit.

Its subcellular location is the periplasm. The chain is Probable tetraheme cytochrome c-type (cycX1) from Nitrosomonas europaea (strain ATCC 19718 / CIP 103999 / KCTC 2705 / NBRC 14298).